The sequence spans 167 residues: Leukotoxin-activating lysine-acyltransferase LktC serotype T3 (167 aa).

Catalysis depends on residues His-22 and Asp-91.

Belongs to the RTX toxin acyltransferase family.

The protein localises to the cytoplasm. The enzyme catalyses a fatty acyl-[ACP] + L-lysyl-[protein] = N(6)-(fatty acyl)-L-lysyl-[protein] + holo-[ACP] + H(+). Involved in fatty acylation of the protoxin (LktA) at two internal lysine residues, thereby converting it to the active toxin. This is Leukotoxin-activating lysine-acyltransferase LktC serotype T3 (lktC) from Mannheimia haemolytica (Pasteurella haemolytica).